A 77-amino-acid polypeptide reads, in one-letter code: Putative neurotoxin 1 (77 aa).

Residues 1 to 25 form the signal peptide; that stretch reads MKAFIAILSIAIVLLLIVSIKETSA. Residues 26–46 constitute a propeptide that is removed on maturation; the sequence is KDCKQECVKRYTKGDLTNFLK.

This sequence belongs to the scolopendra neurotoxin 3 family. In terms of processing, contains 2 disulfide bonds. Expressed by the venom gland.

The protein resides in the secreted. The protein is Putative neurotoxin 1 of Scolopendra mutilans (Chinese red-headed centipede).